Reading from the N-terminus, the 155-residue chain is Small ribosomal subunit protein mS86 (155 aa).

Residues 1-27 (MHYMGLFSRAGNIFRQPRALQASNAML) constitute a mitochondrion transit peptide. In terms of domain architecture, RRM spans 36–114 (SKIFVGGLSP…RIIGVHPADS (79 aa)).

The protein belongs to the GR-RBP family. Component of the mitochondrial ribosome small subunit.

Its subcellular location is the mitochondrion. Possibly has a role in RNA transcription or processing during stress. In Arabidopsis thaliana (Mouse-ear cress), this protein is Small ribosomal subunit protein mS86 (RBG6).